We begin with the raw amino-acid sequence, 201 residues long: Adenylyl-sulfate kinase (201 aa).

Position 35 to 42 (35 to 42 (GLSGSGKS)) interacts with ATP. Catalysis depends on Ser-109, which acts as the Phosphoserine intermediate.

The protein belongs to the APS kinase family.

The catalysed reaction is adenosine 5'-phosphosulfate + ATP = 3'-phosphoadenylyl sulfate + ADP + H(+). It functions in the pathway sulfur metabolism; hydrogen sulfide biosynthesis; sulfite from sulfate: step 2/3. Its function is as follows. Catalyzes the synthesis of activated sulfate. This chain is Adenylyl-sulfate kinase, found in Salmonella arizonae (strain ATCC BAA-731 / CDC346-86 / RSK2980).